The chain runs to 1186 residues: Syntaxin-binding protein 5-like (1186 aa).

Position 1 is an N-acetylmethionine (methionine 1). The interval 15–40 (ASSPGSGSSSGSNSGGGAGSGSVHPA) is disordered. Residues 16–26 (SSPGSGSSSGS) are compositionally biased toward low complexity. WD repeat units follow at residues 74–107 (TALAFDPVQKILAIGTRTGAIRILGRPGVDCYCQ), 114–153 (VLQLQFLINEGALVSASSDDTLHLWNLRQKRPAILHSLKF), 158–194 (ITYCHLPFQSKWLYVGTERGNTHIVNIESFILSGYVI), 213–247 (HLSDSPRDEGKLLIGYENGTVVFWDLKSKRAELRV), 253–285 (IHSIDWHHEGKQFMCSHSDGSLTLWNLKSPSRP), 307–349 (PILK…KAIT), 357–391 (IVEFLTLCETPYPNEFQEPYAVVVLLEKDLIVVDL), 413–490 (TCTA…YKLK), 518–629 (QMIY…ELVI), and 643–705 (TSLA…IADN). Threonine 568 bears the Phosphothreonine mark. 3 positions are modified to phosphoserine: serine 574, serine 589, and serine 593. Residue threonine 596 is modified to Phosphothreonine. The residue at position 599 (serine 599) is a Phosphoserine. Arginine 709 is modified (omega-N-methylarginine). A compositionally biased stretch (polar residues) spans 748 to 769 (TSDHVNGHCTSPTSQSCSSGKR). A disordered region spans residues 748 to 771 (TSDHVNGHCTSPTSQSCSSGKRLS). Serine 763, serine 765, serine 766, serine 771, serine 772, serine 793, serine 800, serine 812, serine 820, serine 822, and serine 823 each carry phosphoserine. WD repeat units lie at residues 832-889 (ITAL…SGTF), 898-969 (TFSC…QTCL), 974-1018 (ITET…LDVN), and 1032-1055 (CFTNEGQALYLVSPTEIQRLTYSQ). A Phosphothreonine modification is found at threonine 1093. Residues 1121-1181 (SIEGMKGAAG…HELMLKYKDK (61 aa)) form the v-SNARE coiled-coil homology domain.

It belongs to the WD repeat L(2)GL family. Interacts with STX1A and STX4. Post-translationally, phosphorylated, leading to STXBP5L increased turnover and subsequent de-repression of insulin secretion. Phosphorylated on serine residues in response to glucose or phorbol esters. Ubiquitinated by the E3 ligase SYVN1, leading to STXBP5L proteasomal degradation. As to expression, detected in kidney, hippocampus and lung carcinoma.

The protein resides in the cytoplasm. It is found in the cell membrane. The protein localises to the membrane. Plays a role in vesicle trafficking and exocytosis inhibition. In pancreatic beta-cells, inhibits insulin secretion probably by interacting with and regulating STX1A and STX4, key t-SNARE proteins involved in the fusion of insulin granules to the plasma membrane. Also plays a role in neurotransmitter release by inhibiting basal acetylcholine release from axon terminals and by preventing synaptic fatigue upon repetitive stimulation. Promotes as well axonal outgrowth. The protein is Syntaxin-binding protein 5-like (STXBP5L) of Homo sapiens (Human).